Reading from the N-terminus, the 291-residue chain is Putative GATA transcription factor 13 (291 aa).

The GATA-type zinc-finger motif lies at 187-241 (KSRRLKCTHCETTTTPQWREGPNGRKTLCNACGIRFRSGRLVLEYRPAASPTFIP). The disordered stretch occupies residues 271–291 (TSGPETRSRLRNFGRPMSYGQ).

Belongs to the type IV zinc-finger family. Class A subfamily.

Its subcellular location is the nucleus. Transcriptional activator that specifically binds 5'-GATA-3' or 5'-GAT-3' motifs within gene promoters. May be involved in the regulation of some light-responsive genes. The protein is Putative GATA transcription factor 13 (GATA13) of Arabidopsis thaliana (Mouse-ear cress).